Here is a 302-residue protein sequence, read N- to C-terminus: Nucleotide-binding protein Rsph17025_2562 (302 aa).

Residue 15 to 22 (GPSGAGRT) coordinates ATP. 62–65 (DVRN) serves as a coordination point for GTP.

It belongs to the RapZ-like family.

Its function is as follows. Displays ATPase and GTPase activities. This is Nucleotide-binding protein Rsph17025_2562 from Cereibacter sphaeroides (strain ATCC 17025 / ATH 2.4.3) (Rhodobacter sphaeroides).